The following is a 330-amino-acid chain: Aspartate--ammonia ligase (330 aa).

The protein belongs to the class-II aminoacyl-tRNA synthetase family. AsnA subfamily.

The protein localises to the cytoplasm. The enzyme catalyses L-aspartate + NH4(+) + ATP = L-asparagine + AMP + diphosphate + H(+). The protein operates within amino-acid biosynthesis; L-asparagine biosynthesis; L-asparagine from L-aspartate (ammonia route): step 1/1. In Cronobacter sakazakii (strain ATCC BAA-894) (Enterobacter sakazakii), this protein is Aspartate--ammonia ligase.